The sequence spans 372 residues: MAFQGCDCFGLLVWLLLLQTRLGKARMVPGTPSLSPLPSENGLDDSGVNPQERPLTGMPETSLPRKPGDSTRPLDSMAFTPGQSFSTMSLSRQPFPTWVPPTSACGHRTARIVGGRPAPARKWPWQVSLQVHKQHICGGSLISKWWVITAAHCVYGHLDYAVFMGDADLWSKRPVRIPVQDIIVHQDFSMMRTVVHDIALVLLAFPVNYSVNIQPVCIPEKSFLVQPGTLCWVTGWGKVLEQGRSSRILQEIELNIIRHEKCNQILKDIMGNIFTLVQEGGVCGYNEKGGDACQGDSGGPLVCEFNKTWVQVGIVSWGLGCGRIGYPGVYTEVSYYRDWIIKELSRASCWKLSGFLVLSVCLVLHLAIVVAL.

The N-terminal stretch at 1–25 is a signal peptide; the sequence is MAFQGCDCFGLLVWLLLLQTRLGKA. Topologically, residues 26 to 351 are extracellular; that stretch reads RMVPGTPSLS…KELSRASCWK (326 aa). The disordered stretch occupies residues 31 to 72; the sequence is TPSLSPLPSENGLDDSGVNPQERPLTGMPETSLPRKPGDSTR. One can recognise a Peptidase S1 domain in the interval 112–345; sequence IVGGRPAPAR…YRDWIIKELS (234 aa). The cysteines at positions 137 and 153 are disulfide-linked. Catalysis depends on charge relay system residues H152 and D197. The N-linked (GlcNAc...) asparagine glycan is linked to N208. Disulfide bonds link C231–C303, C262–C283, and C293–C321. Catalysis depends on S297, which acts as the Charge relay system. A helical transmembrane segment spans residues 352 to 372; it reads LSGFLVLSVCLVLHLAIVVAL.

The protein belongs to the peptidase S1 family. As to expression, testis-specific. Expressed by primary and secondary spermatocytes.

Its subcellular location is the membrane. The protein localises to the cytoplasm. Its function is as follows. Lacks protease activity in vitro. The chain is Serine protease 44 from Mus musculus (Mouse).